Reading from the N-terminus, the 400-residue chain is MSKLILAINAGSSSLKFQLIRMPEEELVTKGLIERIGLKDSIFTIEVNGEKVKTVQDIKDHVEAVDIMLDAFKAHNIINDINDIVGTGHRVVHGGEKFPESVAITDEVEKEIEELSELAPLHNPANLMGIRAFRKLLPNIPHVAIFDTAFHQTMPEKAYLYSLPYHYYKDYGIRKYGFHGTSHKFVSQRAAEMLDKPIEDLRIISCHIGNGASIAAIDGGKSIDTSMGFTPLAGVTMGTRSGNIDPALIPFIMEKTGKTAEQVLEILNKESGLLGLSGTSSDLRDLSEEAESGKARSQMALDVFASKIHKYIGSYAARMHGVDVIVFTAGIGENSVEIRAKVLEGLEFMGVYWDPKKNENLLRGKEGFINYPHSPVKVVVIPTDEESMIARDVMTFGGLK.

Position 9 (Asn-9) interacts with Mg(2+). Residue Lys-16 participates in ATP binding. Arg-90 serves as a coordination point for substrate. Residue Asp-147 is the Proton donor/acceptor of the active site. ATP is bound by residues 207-211 (HIGNG), 282-284 (DLR), and 330-334 (GIGEN). Glu-385 provides a ligand contact to Mg(2+).

It belongs to the acetokinase family. In terms of assembly, homodimer. Mg(2+) is required as a cofactor. The cofactor is Mn(2+).

It localises to the cytoplasm. The catalysed reaction is acetate + ATP = acetyl phosphate + ADP. The protein operates within metabolic intermediate biosynthesis; acetyl-CoA biosynthesis; acetyl-CoA from acetate: step 1/2. Its function is as follows. Catalyzes the formation of acetyl phosphate from acetate and ATP. Can also catalyze the reverse reaction. This is Acetate kinase from Staphylococcus aureus (strain Mu3 / ATCC 700698).